The chain runs to 241 residues: ATP synthase subunit a (241 aa).

5 helical membrane-spanning segments follow: residues Gly-30–Gly-50, Phe-91–Trp-111, Ile-128–Ser-148, Leu-193–Leu-213, and Gly-214–Gly-234.

Belongs to the ATPase A chain family. F-type ATPases have 2 components, CF(1) - the catalytic core - and CF(0) - the membrane proton channel. CF(1) has five subunits: alpha(3), beta(3), gamma(1), delta(1), epsilon(1). CF(0) has four main subunits: a, b, b' and c.

The protein localises to the cellular thylakoid membrane. Key component of the proton channel; it plays a direct role in the translocation of protons across the membrane. In Prochlorococcus marinus (strain MIT 9211), this protein is ATP synthase subunit a.